Consider the following 459-residue polypeptide: Sulfite oxidase (459 aa).

Positions 4-83 (YPRYTREEVG…LQQYKVGELS (80 aa)) constitute a Cytochrome b5 heme-binding domain. Residues H40, H65, and H69 each coordinate heme b. Residues 83 to 115 (SPDEAPAAPDAQDPFAGDPPRHPGLRVNSQKPF) are disordered. Residues 85 to 100 (DEAPAAPDAQDPFAGD) show a composition bias toward low complexity. The interval 86–95 (EAPAAPDAQD) is hinge. The moco domain stretch occupies residues 96–323 (PFAGDPPRHP…PSRWQQNDYK (228 aa)). Mo-molybdopterin contacts are provided by residues 136-140 (FTRNH), C185, D244, H283, R288, and 299-301 (SVK). Positions 324–459 (GFSPCVDWDT…RGVLSTAWHR (136 aa)) are homodimerization.

As to quaternary structure, homodimer. Heme b serves as cofactor. It depends on Mo-molybdopterin as a cofactor.

The protein localises to the mitochondrion intermembrane space. The catalysed reaction is sulfite + O2 + H2O = sulfate + H2O2. It functions in the pathway energy metabolism; sulfur metabolism. Functionally, catalyzes the oxidation of sulfite to sulfate, the terminal reaction in the oxidative degradation of sulfur-containing amino acids. This chain is Sulfite oxidase (SUOX), found in Gallus gallus (Chicken).